The primary structure comprises 242 residues: Probable 2-phosphosulfolactate phosphatase (242 aa).

It belongs to the ComB family. The cofactor is Mg(2+).

It carries out the reaction (2R)-O-phospho-3-sulfolactate + H2O = (2R)-3-sulfolactate + phosphate. The polypeptide is Probable 2-phosphosulfolactate phosphatase (Prochlorococcus marinus (strain NATL2A)).